The primary structure comprises 369 residues: Putative F-box protein At1g70960 (369 aa).

One can recognise an F-box domain in the interval 3–54 (NTSFETLPRHMQMEILSRVPLKFLMKFMCVSKKWASIIRGEEFREDYLFQSM).

The protein is Putative F-box protein At1g70960 of Arabidopsis thaliana (Mouse-ear cress).